Reading from the N-terminus, the 940-residue chain is Isoleucine--tRNA ligase (940 aa).

Residues 58–68 (PYANGSIHIGH) carry the 'HIGH' region motif. E564 serves as a coordination point for L-isoleucyl-5'-AMP. Residues 605-609 (KMSKS) carry the 'KMSKS' region motif. K608 contributes to the ATP binding site. Zn(2+) contacts are provided by C903, C906, C923, and C926.

The protein belongs to the class-I aminoacyl-tRNA synthetase family. IleS type 1 subfamily. As to quaternary structure, monomer. The cofactor is Zn(2+).

It is found in the cytoplasm. It catalyses the reaction tRNA(Ile) + L-isoleucine + ATP = L-isoleucyl-tRNA(Ile) + AMP + diphosphate. In terms of biological role, catalyzes the attachment of isoleucine to tRNA(Ile). As IleRS can inadvertently accommodate and process structurally similar amino acids such as valine, to avoid such errors it has two additional distinct tRNA(Ile)-dependent editing activities. One activity is designated as 'pretransfer' editing and involves the hydrolysis of activated Val-AMP. The other activity is designated 'posttransfer' editing and involves deacylation of mischarged Val-tRNA(Ile). This is Isoleucine--tRNA ligase from Shewanella sp. (strain W3-18-1).